Here is a 742-residue protein sequence, read N- to C-terminus: MKQAMTPEEIKEKKPYLDWSLSEHEYDYICDHLLHRLPNYTEIGLFSAMWSEHCSYKKSKPVLKLFPTKGKRVVQGPGEGAGVVDIDDGQAVVFKAESHNHPTTVEPYQGAATGVGGILRDVFSMGARPVAILDSLHFGELKDNPTMRYKMEETIKGVGDYGNCMGIPNLGGETTFDPCYNGNILLNAMNVGIMDIKDMEHGDATGVGNAVMYVGAKTGRDGIHGATFASADFSEEHATQRSAVQVGDPFMEKLLMEACLELILHHREWLVGIQDMGAAGIVSSSAEMATEGKSGMDLNLNLVPQREPNMSAYEIMLSESQERMLLCVKKGHEEDVKKIFDEYNLDAVTIGRITDDGRYVLHHDDQVVCDIPVVTLTEKVLEEKSEEKKPQRIIDVEQSENWQPEIEDAGQTLRALLNQPTIANDQFVTQQYDSQVRTDTIVGPGSDSGILRVRHTKKAIAMTTDTNGRFVYLDPKVGGQRTVLESATNIVASGALPLAITDCLNYGDPNDPEIFWELHQSCQGIADACEILETPVVSGNVSLYNENNGKAIYPSPMIGMVGLIKNYDHVIPMHMQTAGDKIYLVGKTDDDFAGSELQKMMTGKISGLPHAPNLPGIKDYLYKLQKLMAEGLVQSAHDLSEGGLGVSLAESVFDTDLGVNVKLDFNKNLLFSETPGRLIVSVAPENAAKFEQEMGDAVSEIGQVTDDKQLNISLTNDQVNEDVAKLQKIWKECIPCLMKSKA.

Residue His53 is part of the active site. ATP contacts are provided by Tyr56 and Lys95. Residue Glu97 participates in Mg(2+) binding. Substrate is bound by residues 98 to 101 and Arg120; that span reads SHNH. His99 functions as the Proton acceptor in the catalytic mechanism. Asp121 is a binding site for Mg(2+). Residue Gln245 participates in substrate binding. Asp275 is a Mg(2+) binding site. Residue 319-321 coordinates substrate; it reads ESQ. Positions 502 and 539 each coordinate ATP. Asn540 is a Mg(2+) binding site. Residue Ser542 participates in substrate binding.

The protein belongs to the FGAMS family. Monomer. Part of the FGAM synthase complex composed of 1 PurL, 1 PurQ and 2 PurS subunits.

Its subcellular location is the cytoplasm. The enzyme catalyses N(2)-formyl-N(1)-(5-phospho-beta-D-ribosyl)glycinamide + L-glutamine + ATP + H2O = 2-formamido-N(1)-(5-O-phospho-beta-D-ribosyl)acetamidine + L-glutamate + ADP + phosphate + H(+). It functions in the pathway purine metabolism; IMP biosynthesis via de novo pathway; 5-amino-1-(5-phospho-D-ribosyl)imidazole from N(2)-formyl-N(1)-(5-phospho-D-ribosyl)glycinamide: step 1/2. Its function is as follows. Part of the phosphoribosylformylglycinamidine synthase complex involved in the purines biosynthetic pathway. Catalyzes the ATP-dependent conversion of formylglycinamide ribonucleotide (FGAR) and glutamine to yield formylglycinamidine ribonucleotide (FGAM) and glutamate. The FGAM synthase complex is composed of three subunits. PurQ produces an ammonia molecule by converting glutamine to glutamate. PurL transfers the ammonia molecule to FGAR to form FGAM in an ATP-dependent manner. PurS interacts with PurQ and PurL and is thought to assist in the transfer of the ammonia molecule from PurQ to PurL. The polypeptide is Phosphoribosylformylglycinamidine synthase subunit PurL (Lactobacillus acidophilus (strain ATCC 700396 / NCK56 / N2 / NCFM)).